The primary structure comprises 342 residues: Alanine racemase (342 aa).

The Proton acceptor; specific for D-alanine role is filled by Lys-33. Lys-33 bears the N6-(pyridoxal phosphate)lysine mark. Arg-128 lines the substrate pocket. Tyr-240 serves as the catalytic Proton acceptor; specific for L-alanine. Met-288 serves as a coordination point for substrate.

This sequence belongs to the alanine racemase family. It depends on pyridoxal 5'-phosphate as a cofactor.

The catalysed reaction is L-alanine = D-alanine. It participates in amino-acid biosynthesis; D-alanine biosynthesis; D-alanine from L-alanine: step 1/1. In terms of biological role, catalyzes the interconversion of L-alanine and D-alanine. May also act on other amino acids. The polypeptide is Alanine racemase (alr) (Jannaschia sp. (strain CCS1)).